The chain runs to 797 residues: Striatin-3 (797 aa).

Met1 is modified (N-acetylmethionine). 2 stretches are compositionally biased toward gly residues: residues 1 to 13 (MDELAGGGGGGPG) and 23 to 43 (GPGGNLGLSPGGNGAAGGGGP). A disordered region spans residues 1 to 60 (MDELAGGGGGGPGMAAPPRQQQGPGGNLGLSPGGNGAAGGGGPPASEGAGPAAGPELSRP). The span at 44–56 (PASEGAGPAAGPE) shows a compositional bias: low complexity. The segment at 71–79 (YIQHEWARF) is caveolin-binding. The stretch at 77–136 (ARFEMERAHWEVERAELQARIAFLQGERKGQENLKKDLVRRIKMLEYALKQERAKYHKLK) forms a coiled coil. Thr150 bears the Phosphothreonine mark. The tract at residues 166 to 183 (QNSQLTWKQGRQLLRQYL) is calmodulin-binding. 3 positions are modified to phosphoserine: Ser202, Ser214, and Ser229. Disordered regions lie at residues 224–278 (LNGG…KHRM) and 313–338 (DGEGAGEARSSGDGTEWDKDDLSPTA). Basic and acidic residues predominate over residues 230–241 (PKQKGQEIKRSS). Positions 253–265 (NADDSDEDEENDM) are enriched in acidic residues. Phosphoserine occurs at positions 257 and 335. WD repeat units follow at residues 478–517 (SHFDGVRALAFHPVEPVLVTASEDHTLKLWNLQKTVPAKK), 531–570 (AHIGPVLSLAISSNGEQCFSGGIDATIQWWNMPSPSVDPY), 584–623 (GHTDAVWGLAYSGIKNQLLSCSADGTVRLWNPQEKLPCIC), 679–718 (QSNNHINRVVSHPTLPVTITAHEDRHIKFFDNKTGKMIHS), 721–760 (AHLDAVTSLAVDPNGIYLMSGSHDCSIRLWNLDSKTCVQE), and 767–797 (KLDESIYDVAFHSSKAYIASAGADALAKVFV).

It belongs to the WD repeat striatin family. Tetramerizes. Part of the core of STRIPAK complexes composed of PP2A catalytic and scaffolding subunits, the striatins (PP2A regulatory subunits), the striatin-associated proteins MOB4, STRIP1 and STRIP2, PDCD10 and members of the STE20 kinases, such as STK24 and STK26. The STRIPAK complex can be extended by adapter proteins such as SLMAP:SIKE1 or CTTNBP2NL. Interacts with CDC42BPB.

The protein resides in the cytoplasm. It localises to the membrane. Calmodulin-binding scaffolding protein which is the center of the striatin-interacting phosphatase and kinase (STRIPAK) complexes. STRIPAK complexes have critical roles in protein (de)phosphorylation and are regulators of multiple signaling pathways including Hippo, MAPK, nuclear receptor and cytoskeleton remodeling. Different types of STRIPAK complexes are involved in a variety of biological processes such as cell growth, differentiation, apoptosis, metabolism and immune regulation. The polypeptide is Striatin-3 (Homo sapiens (Human)).